A 198-amino-acid polypeptide reads, in one-letter code: Recombination protein RecR (198 aa).

The C4-type zinc finger occupies cysteine 57–cysteine 72. One can recognise a Toprim domain in the interval serine 80 to alanine 175.

The protein belongs to the RecR family.

Functionally, may play a role in DNA repair. It seems to be involved in an RecBC-independent recombinational process of DNA repair. It may act with RecF and RecO. This Streptococcus agalactiae serotype Ia (strain ATCC 27591 / A909 / CDC SS700) protein is Recombination protein RecR.